Reading from the N-terminus, the 188-residue chain is NADH-quinone oxidoreductase subunit B (188 aa).

The [4Fe-4S] cluster site is built by C67, C68, C132, and C162.

It belongs to the complex I 20 kDa subunit family. In terms of assembly, NDH-1 is composed of 14 different subunits. Subunits NuoB, C, D, E, F, and G constitute the peripheral sector of the complex. Requires [4Fe-4S] cluster as cofactor.

The protein localises to the cell inner membrane. The enzyme catalyses a quinone + NADH + 5 H(+)(in) = a quinol + NAD(+) + 4 H(+)(out). NDH-1 shuttles electrons from NADH, via FMN and iron-sulfur (Fe-S) centers, to quinones in the respiratory chain. Couples the redox reaction to proton translocation (for every two electrons transferred, four hydrogen ions are translocated across the cytoplasmic membrane), and thus conserves the redox energy in a proton gradient. The chain is NADH-quinone oxidoreductase subunit B from Maricaulis maris (strain MCS10) (Caulobacter maris).